Consider the following 178-residue polypeptide: Caveolin-1 (178 aa).

S2 carries the post-translational modification N-acetylserine. S2 carries the post-translational modification Phosphoserine. Residues 2–94 (SGGKYVDSEG…WKASFTTFTV (93 aa)) form a required for homooligomerization region. Residues 2–104 (SGGKYVDSEG…TKYWFYRLLS (103 aa)) lie on the Cytoplasmic side of the membrane. Residue K5 is modified to N6-acetyllysine; alternate. Residue K5 forms a Glycyl lysine isopeptide (Lys-Gly) (interchain with G-Cter in ubiquitin); alternate linkage. Y6 bears the Phosphotyrosine mark. S9 is subject to Phosphoserine. Y14 is modified (phosphotyrosine; by ABL1). Y25 bears the Phosphotyrosine mark. Glycyl lysine isopeptide (Lys-Gly) (interchain with G-Cter in ubiquitin) cross-links involve residues K26 and K30. S37 is modified (phosphoserine). Glycyl lysine isopeptide (Lys-Gly) (interchain with G-Cter in ubiquitin) cross-links involve residues K39, K47, and K57. The interval 82–94 (DGIWKASFTTFTV) is interaction with CAVIN3. An intramembrane region (helical) is located at residues 105 to 125 (ALFGIPMALVWGIYFAILSFL). Residues 126–178 (HIWAVVPCIKSFLIEIQCISRVYSIYVHTVCDPLFEAVGKIFSNVRINLQKEI) are Cytoplasmic-facing. The interval 131–142 (VPCIKSFLIEIQ) is interacts with SPRY1, SPRY2, SPRY3 and SPRY4. Residues C133, C143, and C156 are each lipidated (S-palmitoyl cysteine). An interacts with SPRY1, SPRY2, and SPRY4 region spans residues 149 to 160 (SIYVHTVCDPLF). Residues 167–178 (FSNVRINLQKEI) are interacts with SPRY1, SPRY2, SPRY3 and SPRY4.

The protein belongs to the caveolin family. As to quaternary structure, homooligomer. Interacts with GLIPR2. Interacts with NOSTRIN. Interacts with SNAP25 and STX1A. Interacts (via the N-terminus) with DPP4; the interaction is direct. Interacts with CTNNB1, CDH1 and JUP. Interacts with PACSIN2; this interaction induces membrane tubulation. Interacts with SLC7A9. Interacts with BMX and BTK. Interacts with TGFBR1. Interacts with CAVIN3 (via leucine-zipper domain) in a cholesterol-sensitive manner. Interacts with CAVIN1. Interacts with EHD2 in a cholesterol-dependent manner. Forms a ternary complex with UBXN6 and VCP; mediates CAV1 targeting to lysosomes for degradation. Interacts with ABCG1; this interaction regulates ABCG1-mediated cholesterol efflux. Interacts with NEU3; this interaction enhances NEU3 sialidase activity within caveola. Interacts (via C-terminus) with SPRY1, SPRY2 (via C-terminus), SPRY3, and SPRY4. Interacts with IGFBP5; this interaction allows trafficking of IGFBP5 from the plasma membrane to the nucleus. Post-translationally, phosphorylated at Tyr-14 by ABL1 in response to oxidative stress. Ubiquitinated. Undergo monoubiquitination and multi- and/or polyubiquitination. Monoubiquitination of N-terminal lysines promotes integration in a ternary complex with UBXN6 and VCP which promotes oligomeric CAV1 targeting to lysosomes for degradation. Ubiquitinated by ZNRF1; leading to degradation and modulation of the TLR4-mediated immune response.

It is found in the golgi apparatus membrane. Its subcellular location is the cell membrane. It localises to the membrane. The protein resides in the caveola. The protein localises to the membrane raft. In terms of biological role, may act as a scaffolding protein within caveolar membranes. Forms a stable heterooligomeric complex with CAV2 that targets to lipid rafts and drives caveolae formation. Mediates the recruitment of CAVIN proteins (CAVIN1/2/3/4) to the caveolae. Interacts directly with G-protein alpha subunits and can functionally regulate their activity. Involved in the costimulatory signal essential for T-cell receptor (TCR)-mediated T-cell activation. Its binding to DPP4 induces T-cell proliferation and NF-kappa-B activation in a T-cell receptor/CD3-dependent manner. Recruits CTNNB1 to caveolar membranes and may regulate CTNNB1-mediated signaling through the Wnt pathway. Negatively regulates TGFB1-mediated activation of SMAD2/3 by mediating the internalization of TGFBR1 from membrane rafts leading to its subsequent degradation. Binds 20(S)-hydroxycholesterol (20(S)-OHC). This Papio anubis (Olive baboon) protein is Caveolin-1 (CAV1).